The primary structure comprises 607 residues: Rap1 GTPase-GDP dissociation stimulator 1 (607 aa).

The Nuclear export signal (NES) motif lies at 4 to 13 (LSDTLKKLKI). ARM repeat units follow at residues 89–131 (GLIS…DQAG) and 170–211 (DSLQ…NLAE). A prevents binding to prenylated RHOA region spans residues 122 to 170 (EGRSAVDQAGGAQIVIDHLRSLCSITDPANEKLLTVFCGMLMNYSNEND). N6-acetyllysine is present on Lys-230. An interacts with polybasic regions in GTPases region spans residues 239-255 (DKREMIFEVLAPLAEND). ARM repeat units follow at residues 347 to 390 (DANC…NLAI), 391 to 431 (PVIN…MLID), and 479 to 519 (SKDV…LIAA). The interval 379-428 (HAALSALRNLAIPVINKAKMLSAGVTEAVLKFLKSEMPPVQFKLLGTLRM) is critical for catalytic activity.

In terms of assembly, interacts with RABL3. Interacts with RHOT1. As to quaternary structure, interacts with unprenylated RHOA; the interaction is direct. Interacts with RAP1A. Interacts with KRAS. Interacts with RAC1. Interacts with RAP1B. Preferentially interacts with unprenylated GTPases that will become geranylgeranylated. May also interact with prenylated GTPases. Interacts with prenylated RHOA; the interaction is direct and in a 1:1 stoichiometry. Interacts with RAP1A. Interacts with KRAS. Interacts with RAC1. Interacts with RAP1B. Preferentially interacts with prenylated GTPases. Forms covalent cross-links mediated by transglutaminase TGM2, between a glutamine and the epsilon-amino group of a lysine residue, forming homopolymers and heteropolymers.

The protein localises to the cytoplasm. It is found in the cytosol. It localises to the endoplasmic reticulum. The protein resides in the mitochondrion. Its subcellular location is the nucleus. Its function is as follows. Acts as a GEF (guanine nucleotide exchange factor) for the Rho family of small GTP-binding proteins (G proteins) that stimulates the dissociation of GDP to enable subsequent binding of GTP. Additionally, appears to chaperone the processing and/or trafficking of small GTPases containing a C-terminal polybasic region independently of GEF activity. Targets include RAP1A/RAP1B, RHOA, RHOB, RHOC, RAC1 and KRAS. Regulates mitochondrial dynamics by controlling RHOT function to promote mitochondrial fission during high calcium conditions. Able to promote the Ca(2+) release from the endoplasmic reticulum via both inositol trisphosphate (Ins3P) and ryanodine sensitive receptors leading to a enhanced mitochondrial Ca(2+) uptake. Acts as a GEF (guanine nucleotide exchange factor) for unprenylated RHOA. Chaperones the entry and passage of small GTPases through the prenylation pathway. Recognizes the last amino acid in the GTPase C-terminal CAAX motif with a preference for 'Leu' over 'Met', indicating involvement in the geranylgeranylation pathway. In terms of biological role, acts as a GEF (guanine nucleotide exchange factor) for prenylated RHOA. Acts as a GEF for RHOC. Chaperones the downstream trafficking and/or processing of small newly prenylated GTPases. Escorts RAC1 to the nucleus. This Homo sapiens (Human) protein is Rap1 GTPase-GDP dissociation stimulator 1.